The sequence spans 631 residues: 1-deoxy-D-xylulose-5-phosphate synthase (631 aa).

Residues histidine 87 and 128 to 130 contribute to the thiamine diphosphate site; that span reads GHS. A Mg(2+)-binding site is contributed by aspartate 159. Thiamine diphosphate is bound by residues 160-161, asparagine 188, phenylalanine 295, and glutamate 377; that span reads GA. Asparagine 188 lines the Mg(2+) pocket.

Belongs to the transketolase family. DXPS subfamily. In terms of assembly, homodimer. Mg(2+) serves as cofactor. Thiamine diphosphate is required as a cofactor.

The catalysed reaction is D-glyceraldehyde 3-phosphate + pyruvate + H(+) = 1-deoxy-D-xylulose 5-phosphate + CO2. Its pathway is metabolic intermediate biosynthesis; 1-deoxy-D-xylulose 5-phosphate biosynthesis; 1-deoxy-D-xylulose 5-phosphate from D-glyceraldehyde 3-phosphate and pyruvate: step 1/1. Catalyzes the acyloin condensation reaction between C atoms 2 and 3 of pyruvate and glyceraldehyde 3-phosphate to yield 1-deoxy-D-xylulose-5-phosphate (DXP). The polypeptide is 1-deoxy-D-xylulose-5-phosphate synthase (Pseudomonas putida (strain W619)).